We begin with the raw amino-acid sequence, 273 residues long: Phosphatidylglycerol--prolipoprotein diacylglyceryl transferase (273 aa).

3 helical membrane passes run 20–40 (LAVR…LPIA), 59–79 (FLFY…VLFY), and 97–117 (GGMS…YFSW). A 1,2-diacyl-sn-glycero-3-phospho-(1'-sn-glycerol) is bound at residue R142. 2 helical membrane passes run 206–226 (FGFL…FCEF) and 243–263 (MGQL…VYAM).

The protein belongs to the Lgt family.

It is found in the cell inner membrane. It catalyses the reaction L-cysteinyl-[prolipoprotein] + a 1,2-diacyl-sn-glycero-3-phospho-(1'-sn-glycerol) = an S-1,2-diacyl-sn-glyceryl-L-cysteinyl-[prolipoprotein] + sn-glycerol 1-phosphate + H(+). The protein operates within protein modification; lipoprotein biosynthesis (diacylglyceryl transfer). Functionally, catalyzes the transfer of the diacylglyceryl group from phosphatidylglycerol to the sulfhydryl group of the N-terminal cysteine of a prolipoprotein, the first step in the formation of mature lipoproteins. In Gluconobacter oxydans (strain 621H) (Gluconobacter suboxydans), this protein is Phosphatidylglycerol--prolipoprotein diacylglyceryl transferase.